The chain runs to 677 residues: mRNA 3'-end-processing protein RNA14 (677 aa).

6 HAT repeats span residues 56–88 (ESYA…GELA), 90–124 (DEFE…YIRR), 138–170 (VIVK…FLEQ), 181–214 (QRID…WEQE), 257–289 (RTAN…WERE), and 298–330 (MLSQ…YISE).

Component of the CFIA complex, which is composed of RNA14, RNA15, PCF11 and CLP1. Interacts with FIP1, PFS2, YSH1 and probably also with RNA15. Probably interacts with the phosphorylated CTD domain of RPB1/RNA polymerase II.

The protein resides in the nucleus. It localises to the cytoplasm. Its function is as follows. Component of the cleavage factor IA (CFIA) complex, which is involved in the endonucleolytic cleavage during polyadenylation-dependent pre-mRNA 3'-end formation and cooperates with the cleavage factor NAB4/CFIB and the cleavage and polyadenylation factor (CPF) complex. The sequence is that of mRNA 3'-end-processing protein RNA14 (RNA14) from Saccharomyces cerevisiae (strain ATCC 204508 / S288c) (Baker's yeast).